The primary structure comprises 160 residues: Probable transcriptional regulator YgiV (160 aa).

Its function is as follows. Represses expression of mcbR. This Escherichia coli O157:H7 protein is Probable transcriptional regulator YgiV (ygiV).